The following is a 134-amino-acid chain: Ribosome-binding factor A (134 aa).

Belongs to the RbfA family. In terms of assembly, monomer. Binds 30S ribosomal subunits, but not 50S ribosomal subunits or 70S ribosomes.

Its subcellular location is the cytoplasm. Its function is as follows. One of several proteins that assist in the late maturation steps of the functional core of the 30S ribosomal subunit. Associates with free 30S ribosomal subunits (but not with 30S subunits that are part of 70S ribosomes or polysomes). Required for efficient processing of 16S rRNA. May interact with the 5'-terminal helix region of 16S rRNA. The chain is Ribosome-binding factor A from Baumannia cicadellinicola subsp. Homalodisca coagulata.